We begin with the raw amino-acid sequence, 466 residues long: Cysteine--tRNA ligase (466 aa).

Cys-28 is a Zn(2+) binding site. Residues 30-40 carry the 'HIGH' region motif; sequence PTVYNFFHIGN. Positions 208, 233, and 237 each coordinate Zn(2+). Positions 265-269 match the 'KMSKS' region motif; sequence KMSKS. An ATP-binding site is contributed by Lys-268.

It belongs to the class-I aminoacyl-tRNA synthetase family. In terms of assembly, monomer. The cofactor is Zn(2+).

It localises to the cytoplasm. The catalysed reaction is tRNA(Cys) + L-cysteine + ATP = L-cysteinyl-tRNA(Cys) + AMP + diphosphate. The sequence is that of Cysteine--tRNA ligase from Clostridium perfringens (strain SM101 / Type A).